Consider the following 488-residue polypeptide: Ribulose bisphosphate carboxylase large chain (488 aa).

The substrate site is built by Asn-127 and Thr-177. The active-site Proton acceptor is Lys-179. Lys-181 lines the substrate pocket. The Mg(2+) site is built by Lys-205, Asp-207, and Glu-208. Lys-205 carries the post-translational modification N6-carboxylysine. Catalysis depends on His-297, which acts as the Proton acceptor. Residues Arg-298, His-330, and Ser-382 each coordinate substrate.

It belongs to the RuBisCO large chain family. Type I subfamily. Heterohexadecamer of 8 large chains and 8 small chains. Requires Mg(2+) as cofactor.

It is found in the plastid. Its subcellular location is the chloroplast. The catalysed reaction is 2 (2R)-3-phosphoglycerate + 2 H(+) = D-ribulose 1,5-bisphosphate + CO2 + H2O. The enzyme catalyses D-ribulose 1,5-bisphosphate + O2 = 2-phosphoglycolate + (2R)-3-phosphoglycerate + 2 H(+). Functionally, ruBisCO catalyzes two reactions: the carboxylation of D-ribulose 1,5-bisphosphate, the primary event in carbon dioxide fixation, as well as the oxidative fragmentation of the pentose substrate in the photorespiration process. Both reactions occur simultaneously and in competition at the same active site. This Ectocarpus siliculosus (Brown alga) protein is Ribulose bisphosphate carboxylase large chain.